We begin with the raw amino-acid sequence, 176 residues long: Methylmalonyl-CoA epimerase, mitochondrial (176 aa).

Residues 1–36 constitute a mitochondrion transit peptide; the sequence is MARVLKAAAANAVGLFSRLQAPIPTVRASSTSQPLD. The region spanning 47–176 is the VOC domain; it reads RLNHVAIAVP…GGVLVELEQA (130 aa). His-50 is a Co(2+) binding site. Lys-114 is subject to N6-succinyllysine. His-122 is a Co(2+) binding site. Lys-150 is modified (N6-acetyllysine; alternate). Lys-150 bears the N6-succinyllysine; alternate mark. Glu-172 is a Co(2+) binding site.

This sequence belongs to the methylmalonyl-CoA epimerase family.

It localises to the mitochondrion. The enzyme catalyses (R)-methylmalonyl-CoA = (S)-methylmalonyl-CoA. Its function is as follows. Methylmalonyl-CoA epimerase involved in propionyl-CoA metabolism. This Homo sapiens (Human) protein is Methylmalonyl-CoA epimerase, mitochondrial.